Here is a 375-residue protein sequence, read N- to C-terminus: Histidine biosynthesis bifunctional protein HisB (375 aa).

The interval 1 to 168 (MTPILFVDRD…GIAHELADAP (168 aa)) is histidinol-phosphatase. Aspartate 8 (nucleophile) is an active-site residue. Residues aspartate 8, aspartate 10, and aspartate 128 each coordinate Mg(2+). Aspartate 10 acts as the Proton donor in catalysis. The segment at 169–375 (RRALVQRNTK…TALPTTKGTL (207 aa)) is imidazoleglycerol-phosphate dehydratase.

It in the N-terminal section; belongs to the histidinol-phosphatase family. This sequence in the C-terminal section; belongs to the imidazoleglycerol-phosphate dehydratase family. Mg(2+) is required as a cofactor.

It localises to the cytoplasm. It catalyses the reaction D-erythro-1-(imidazol-4-yl)glycerol 3-phosphate = 3-(imidazol-4-yl)-2-oxopropyl phosphate + H2O. The catalysed reaction is L-histidinol phosphate + H2O = L-histidinol + phosphate. Its pathway is amino-acid biosynthesis; L-histidine biosynthesis; L-histidine from 5-phospho-alpha-D-ribose 1-diphosphate: step 6/9. It participates in amino-acid biosynthesis; L-histidine biosynthesis; L-histidine from 5-phospho-alpha-D-ribose 1-diphosphate: step 8/9. This is Histidine biosynthesis bifunctional protein HisB from Xanthomonas axonopodis pv. citri (strain 306).